Consider the following 489-residue polypeptide: 3-octaprenyl-4-hydroxybenzoate carboxy-lyase (489 aa).

Asparagine 172 contributes to the Mn(2+) binding site. Prenylated FMN-binding positions include 175–177 (VYR), 189–191 (RWL), and 194–195 (RG). Glutamate 240 serves as a coordination point for Mn(2+). Aspartate 288 functions as the Proton donor in the catalytic mechanism.

The protein belongs to the UbiD family. Homohexamer. Prenylated FMN serves as cofactor. It depends on Mn(2+) as a cofactor.

The protein localises to the cell membrane. The enzyme catalyses a 4-hydroxy-3-(all-trans-polyprenyl)benzoate + H(+) = a 2-(all-trans-polyprenyl)phenol + CO2. Its pathway is cofactor biosynthesis; ubiquinone biosynthesis. Its function is as follows. Catalyzes the decarboxylation of 3-octaprenyl-4-hydroxy benzoate to 2-octaprenylphenol, an intermediate step in ubiquinone biosynthesis. This is 3-octaprenyl-4-hydroxybenzoate carboxy-lyase from Wigglesworthia glossinidia brevipalpis.